The following is a 424-amino-acid chain: Histidine--tRNA ligase (424 aa).

This sequence belongs to the class-II aminoacyl-tRNA synthetase family. In terms of assembly, homodimer.

Its subcellular location is the cytoplasm. The catalysed reaction is tRNA(His) + L-histidine + ATP = L-histidyl-tRNA(His) + AMP + diphosphate + H(+). In Salmonella arizonae (strain ATCC BAA-731 / CDC346-86 / RSK2980), this protein is Histidine--tRNA ligase.